Reading from the N-terminus, the 193-residue chain is DNA damage-inducible transcript 4-like protein (193 aa).

It belongs to the DDIT4 family.

It is found in the cytoplasm. Functionally, inhibits cell growth by regulating the TOR signaling pathway upstream of the TSC1-TSC2 complex and downstream of AKT1. The chain is DNA damage-inducible transcript 4-like protein (DDIT4L) from Bos taurus (Bovine).